The primary structure comprises 464 residues: Protein FAM90A22 (464 aa).

3 disordered regions span residues 1 to 43 (MMAR…PRLK), 70 to 389 (PATL…HDGA), and 415 to 437 (HSPEKPGAFLAQSPHVSEKSEAP). Basic and acidic residues-rich tracts occupy residues 74–89 (GKKEGKENLKPWKPRA) and 97–114 (NKDKGEKEERPRQQDPQR). Positions 182–197 (SLSPLRKTSLSSSSSL) are enriched in low complexity.

Belongs to the FAM90 family.

The polypeptide is Protein FAM90A22 (Homo sapiens (Human)).